The primary structure comprises 642 residues: tRNA uridine 5-carboxymethylaminomethyl modification enzyme MnmG (642 aa).

FAD is bound by residues 10–15, V122, and S177; that span reads GAGHAG. 269–283 serves as a coordination point for NAD(+); that stretch reads SARYCPSLEDKVMRF. Q366 serves as a coordination point for FAD.

The protein belongs to the MnmG family. Homodimer. Heterotetramer of two MnmE and two MnmG subunits. FAD serves as cofactor.

The protein localises to the cytoplasm. NAD-binding protein involved in the addition of a carboxymethylaminomethyl (cmnm) group at the wobble position (U34) of certain tRNAs, forming tRNA-cmnm(5)s(2)U34. The chain is tRNA uridine 5-carboxymethylaminomethyl modification enzyme MnmG from Syntrophobacter fumaroxidans (strain DSM 10017 / MPOB).